Reading from the N-terminus, the 111-residue chain is uncharacterized protein (111 aa).

The next 2 membrane-spanning stretches (helical) occupy residues 7 to 27 and 53 to 73; these read ILNIILALAVPIGLLFISMMI and AFAMFIPLLIIALTLLVTFLH.

The protein localises to the cell membrane. This is an uncharacterized protein from Bacillus anthracis.